Here is a 1377-residue protein sequence, read N- to C-terminus: Temperature-sensitive hemagglutinin tsh autotransporter (1377 aa).

The N-terminal stretch at 1–52 is a signal peptide; that stretch reads MNRIYSLRYSAVARGFIAVSEFARKCVHKSVRRLCFPVLLLIPVLFSAGSLA. Residues 53 to 302 enclose the Peptidase S6 domain; the sequence is GTVNNELGYQ…AVIPLDFIGQ (250 aa). Residues His-125, Asp-153, and Ser-259 each act as charge relay system in the active site. The 267-residue stretch at 1111-1377 folds into the Autotransporter domain; it reads DINGEAGTWV…AINANIRYSF (267 aa).

In terms of processing, the C-terminus is blocked. Post-translationally, cleaved to release the mature protein from the outer membrane.

It is found in the periplasm. It localises to the secreted. The protein resides in the cell surface. The protein localises to the cell outer membrane. Contributes to the development of lesions and deposition of fibrin in the avian air sacs. It can act both as an adhesin and as a serine protease. Agglutinates erythrocytes while in contact with the extracellular surface of the bacterial cells. Can adhere to purified hemoglobin and bind with great efficiency to extracellular matrix proteins. Cleaves casein and exhibits mucinolytic activity. This Escherichia coli protein is Temperature-sensitive hemagglutinin tsh autotransporter (tsh).